Reading from the N-terminus, the 173-residue chain is MSLNLEEKKAVVAEVAAQVAAAQTVVVAEYRGIAVEDMTQLRVKARKEGVYLRVLKNTLVRRAVADTPFAGIADQLVGPLAYGISKDPVAAAKVMHEFSKTNDKFVVKAGAMPNFLMSPKDVGNLASMPSREELLSKLLGTMQAPIAQFVRTLNEVPTKFVRGLAAVRDKQAA.

This sequence belongs to the universal ribosomal protein uL10 family. In terms of assembly, part of the ribosomal stalk of the 50S ribosomal subunit. The N-terminus interacts with L11 and the large rRNA to form the base of the stalk. The C-terminus forms an elongated spine to which L12 dimers bind in a sequential fashion forming a multimeric L10(L12)X complex.

Forms part of the ribosomal stalk, playing a central role in the interaction of the ribosome with GTP-bound translation factors. The sequence is that of Large ribosomal subunit protein uL10 from Thiobacillus denitrificans (strain ATCC 25259 / T1).